We begin with the raw amino-acid sequence, 158 residues long: MYEGVQVSSKLEQLQGLLAPVVVALGYQCWGIDFSSQGKHSVLRIYIDKEGGVLVDDCAIVSRQISGVLDVEDPISTEYTLEVSSPGMERPLFTIEQFALYAGEQVRIKLRSPFEGRRNFQGLLRGVEEQDVVVQVEDHEFLLPIDLIDKANIIPTFD.

The protein belongs to the RimP family.

It is found in the cytoplasm. In terms of biological role, required for maturation of 30S ribosomal subunits. The polypeptide is Ribosome maturation factor RimP (Pseudomonas syringae pv. tomato (strain ATCC BAA-871 / DC3000)).